The primary structure comprises 466 residues: Fez family zinc finger protein 1 (466 aa).

The Engrailed homology 1 repressor signature appears at 34–49 (PLAFSIERIMSRTPEP). 6 C2H2-type zinc fingers span residues 261 to 283 (FTCE…MPVH), 289 to 311 (FVCK…KIIH), 317 to 339 (HKCN…TRIH), 345 to 367 (FVCE…KLTH), 373 to 395 (FKCN…MHTH), and 401 to 424 (FTCP…RKLH). Residues 446 to 466 (LPNREQSHTIIQSPQLQKSVY) form a disordered region. Residues 453–466 (HTIIQSPQLQKSVY) are compositionally biased toward polar residues.

The protein belongs to the krueppel C2H2-type zinc-finger protein family.

Its subcellular location is the nucleus. In terms of biological role, transcription repressor. Involved in the development of the forebrain region. The polypeptide is Fez family zinc finger protein 1 (fezf1) (Xenopus laevis (African clawed frog)).